We begin with the raw amino-acid sequence, 940 residues long: Isoleucine--tRNA ligase (940 aa).

Positions 58-68 (PYANGSIHIGH) match the 'HIGH' region motif. Glu564 is a binding site for L-isoleucyl-5'-AMP. Positions 605-609 (KMSKS) match the 'KMSKS' region motif. Lys608 provides a ligand contact to ATP. Zn(2+)-binding residues include Cys903, Cys906, Cys923, and Cys926.

Belongs to the class-I aminoacyl-tRNA synthetase family. IleS type 1 subfamily. In terms of assembly, monomer. Zn(2+) is required as a cofactor.

The protein localises to the cytoplasm. The enzyme catalyses tRNA(Ile) + L-isoleucine + ATP = L-isoleucyl-tRNA(Ile) + AMP + diphosphate. Its function is as follows. Catalyzes the attachment of isoleucine to tRNA(Ile). As IleRS can inadvertently accommodate and process structurally similar amino acids such as valine, to avoid such errors it has two additional distinct tRNA(Ile)-dependent editing activities. One activity is designated as 'pretransfer' editing and involves the hydrolysis of activated Val-AMP. The other activity is designated 'posttransfer' editing and involves deacylation of mischarged Val-tRNA(Ile). The sequence is that of Isoleucine--tRNA ligase from Shewanella sp. (strain W3-18-1).